A 502-amino-acid polypeptide reads, in one-letter code: Chlorophyllide reductase 52.5 kDa chain (502 aa).

A run of 3 helical transmembrane segments spans residues 70–87 (VGTI…LSFV), 131–147 (AIVV…GVPL), and 221–238 (VMIG…GPVV).

It belongs to the BchN/ChlN family. As to quaternary structure, chlorophyllide reductase is composed of three subunits; BchX, BchY and BchZ. Forms a heterodimer of one BchY and one BchZ subunit.

It localises to the cell membrane. The enzyme catalyses 3-deacetyl-3-vinylbacteriochlorophyllide a + 2 oxidized [2Fe-2S]-[ferredoxin] + ADP + phosphate = chlorophyllide a + 2 reduced [2Fe-2S]-[ferredoxin] + ATP + H2O + H(+). It carries out the reaction bacteriochlorophyllide a + 2 oxidized [2Fe-2S]-[ferredoxin] + ADP + phosphate = 3-acetyl-3-devinylchlorophyllide a + 2 reduced [2Fe-2S]-[ferredoxin] + ATP + H2O + H(+). The catalysed reaction is 3-deacetyl-3-(1-hydroxyethyl)bacteriochlorophyllide a + 2 oxidized [2Fe-2S]-[ferredoxin] + ADP + phosphate = 3-devinyl-3-(1-hydroxyethyl)chlorophyllide a + 2 reduced [2Fe-2S]-[ferredoxin] + ATP + H2O + H(+). The protein operates within porphyrin-containing compound metabolism; bacteriochlorophyll biosynthesis (light-independent). In terms of biological role, converts chlorophylls (Chl) into bacteriochlorophylls (BChl) by reducing ring B of the tetrapyrrole. The polypeptide is Chlorophyllide reductase 52.5 kDa chain (bchY) (Cereibacter sphaeroides (strain ATCC 17023 / DSM 158 / JCM 6121 / CCUG 31486 / LMG 2827 / NBRC 12203 / NCIMB 8253 / ATH 2.4.1.) (Rhodobacter sphaeroides)).